The following is a 379-amino-acid chain: MPTVFPDDSVGLVSPQTLHFNEPLELTSGKSLAEYDLVIETYGELNATQSNAVLICHALSGHHHAAGYHSVDERKPGWWDSCIGPGKPIDTRKFFVVALNNLGGCNGSSGPASINPATGKVYGADFPMVTVEDWVHSQARLADRLGIRQWAAVVGGSLGGMQALQWTISYPERVRHCLCIASAPKLSAQNIAFNEVARQAILSDPEFLGGYFQEQGVIPKRGLKLARMVGHITYLSDDAMGAKFGRVLKTEKLNYDLHSVEFQVESYLRYQGEEFSTRFDANTYLLMTKALDYFDPAAAHGDDLVRTLEGVEADFCLMSFTTDWRFSPARSREIVDALIAAKKNVSYLEIDAPQGHDAFLMPIPRYLQAFSGYMNRISV.

One can recognise an AB hydrolase-1 domain in the interval 51 to 360; it reads NAVLICHALS…DAPQGHDAFL (310 aa). Serine 157 (nucleophile) is an active-site residue. Arginine 227 provides a ligand contact to substrate. Residues aspartate 323 and histidine 356 contribute to the active site. A substrate-binding site is contributed by aspartate 357.

This sequence belongs to the AB hydrolase superfamily. MetX family. Homodimer.

The protein localises to the cytoplasm. The catalysed reaction is L-homoserine + succinyl-CoA = O-succinyl-L-homoserine + CoA. Its pathway is amino-acid biosynthesis; L-methionine biosynthesis via de novo pathway; O-succinyl-L-homoserine from L-homoserine: step 1/1. Its function is as follows. Transfers a succinyl group from succinyl-CoA to L-homoserine, forming succinyl-L-homoserine. The protein is Homoserine O-succinyltransferase of Pseudomonas aeruginosa (strain UCBPP-PA14).